Reading from the N-terminus, the 456-residue chain is Bifunctional protein GlmU (456 aa).

Residues 1–230 form a pyrophosphorylase region; that stretch reads MDKRFAVVLA…FQETLGVNDR (230 aa). UDP-N-acetyl-alpha-D-glucosamine contacts are provided by residues 9 to 12, Lys23, Gln73, and 78 to 79; these read LAAG and GT. Residue Asp103 coordinates Mg(2+). UDP-N-acetyl-alpha-D-glucosamine-binding residues include Gly140, Glu155, Asn170, and Asn228. Mg(2+) is bound at residue Asn228. Positions 231–251 are linker; the sequence is VALSQAEIYMKQRINKRHMQN. The tract at residues 252–456 is N-acetyltransferase; it reads GVSLIDPDNT…EDYAENIHKK (205 aa). 2 residues coordinate UDP-N-acetyl-alpha-D-glucosamine: Arg333 and Lys351. The active-site Proton acceptor is His363. Positions 366 and 377 each coordinate UDP-N-acetyl-alpha-D-glucosamine. Acetyl-CoA is bound by residues 386–387, Ala423, and Arg440; that span reads NY.

In the N-terminal section; belongs to the N-acetylglucosamine-1-phosphate uridyltransferase family. This sequence in the C-terminal section; belongs to the transferase hexapeptide repeat family. In terms of assembly, homotrimer. Mg(2+) serves as cofactor.

It is found in the cytoplasm. It catalyses the reaction alpha-D-glucosamine 1-phosphate + acetyl-CoA = N-acetyl-alpha-D-glucosamine 1-phosphate + CoA + H(+). The catalysed reaction is N-acetyl-alpha-D-glucosamine 1-phosphate + UTP + H(+) = UDP-N-acetyl-alpha-D-glucosamine + diphosphate. It functions in the pathway nucleotide-sugar biosynthesis; UDP-N-acetyl-alpha-D-glucosamine biosynthesis; N-acetyl-alpha-D-glucosamine 1-phosphate from alpha-D-glucosamine 6-phosphate (route II): step 2/2. Its pathway is nucleotide-sugar biosynthesis; UDP-N-acetyl-alpha-D-glucosamine biosynthesis; UDP-N-acetyl-alpha-D-glucosamine from N-acetyl-alpha-D-glucosamine 1-phosphate: step 1/1. The protein operates within bacterial outer membrane biogenesis; LPS lipid A biosynthesis. Its function is as follows. Catalyzes the last two sequential reactions in the de novo biosynthetic pathway for UDP-N-acetylglucosamine (UDP-GlcNAc). The C-terminal domain catalyzes the transfer of acetyl group from acetyl coenzyme A to glucosamine-1-phosphate (GlcN-1-P) to produce N-acetylglucosamine-1-phosphate (GlcNAc-1-P), which is converted into UDP-GlcNAc by the transfer of uridine 5-monophosphate (from uridine 5-triphosphate), a reaction catalyzed by the N-terminal domain. The sequence is that of Bifunctional protein GlmU from Bacillus licheniformis (strain ATCC 14580 / DSM 13 / JCM 2505 / CCUG 7422 / NBRC 12200 / NCIMB 9375 / NCTC 10341 / NRRL NRS-1264 / Gibson 46).